The primary structure comprises 383 residues: MFVYYCKECFIMNKQQSKVRYSIRKVSIGILSISIGMFLALGMSNKAYADEIDKSKDFTRGYEQNVFAKSELNANKNTTKDKIKNEGAVKTSDTSLKLDNKSAISNGNEINQDIKISNTPKNSSQGNNLVINNNEPTKEIKIANLEAQNSNQKKTNKVTNNYFGYYSFREAPKTQIYTVKKGDTLSAIALKYKTTVSNIQNTNNIANPNLIFIGQKLKVPMTPLVEPKPKTVSSNNKSNSNSSTLNYLKTLENRGWDFDGSYGWQCFDLVNVYWNHLYGHGLKGYGAKDIPYANNFNSEAKIYHNTPTFKAEPGDLVVFSGRFGGGYGHTAIVLNGDYDGKLMKFQSLDQNWNNGGWRKAEVAHKVVHNYENDMIFIRPFKKA.

A signal peptide spans 1-49 (MFVYYCKECFIMNKQQSKVRYSIRKVSIGILSISIGMFLALGMSNKAYA). The LysM domain occupies 175–219 (QIYTVKKGDTLSAIALKYKTTVSNIQNTNNIANPNLIFIGQKLKV). The Peptidase C51 domain maps to 241–378 (NSSTLNYLKT…NYENDMIFIR (138 aa)).

It is found in the secreted. Functionally, probably involved in peptidoglycan hydrolysis. The sequence is that of Probable cell wall hydrolase LytN (lytN) from Staphylococcus aureus (strain MSSA476).